A 589-amino-acid chain; its full sequence is TAF5-like RNA polymerase II p300/CBP-associated factor-associated factor 65 kDa subunit 5L (589 aa).

WD repeat units follow at residues 266-305 (NTEQ…LKSE), 340-379 (GHCG…NTVL), 382-421 (GHAY…PLRI), 424-463 (GHLA…SVRL), 466-505 (GHRG…LFKE), and 508-547 (GHTD…CNTP).

It belongs to the WD repeat TAF5 family. The PCAF complex is composed of a number of TBP-associated factors (TAFS), such as TAF5, TAF5L, TAF6, TAF6L, TAF9, TAF10 and TAF12, PCAF, and also PCAF-associated factors (PAFs), such as TADA2L/ADA2, TADA3L/ADA3 and SPT3. Component of the STAGA transcription coactivator-HAT complex, at least composed of SUPT3H, GCN5L2, TAF5L, TAF6L, SUPT7L, TADA3L, TAD1L, TAF10, TAF12, TRRAP and TAF9.

It localises to the nucleus. In terms of biological role, functions as a component of the PCAF complex. The PCAF complex is capable of efficiently acetylating histones in a nucleosomal context. The PCAF complex could be considered as the human version of the yeast SAGA complex. With TAF6L, acts as an epigenetic regulator essential for somatic reprogramming. Regulates target genes through H3K9ac deposition and MYC recruitment which trigger MYC regulatory network to orchestrate gene expression programs to control embryonic stem cell state. This chain is TAF5-like RNA polymerase II p300/CBP-associated factor-associated factor 65 kDa subunit 5L, found in Mus musculus (Mouse).